A 683-amino-acid polypeptide reads, in one-letter code: MKTEVNGSAPALAGDHGGVDQDTPDAGDRTEQAKHKTNGATENAPKSANAKDPSRPRRKKARRACFACQRAHLTCGDERPCQRCIKRGLQDACHDGVRKKAKYLHDAPDGALMPGVGGNFYNNAMRNNMPLSRNGTTTVNTTTQQNSGSNYYPTPQSNSYNVYQDTPLTQNSFPSQSPVSPTFNMKTTPTARSNSLSSSVNQQPPSTTVSGATQSQNPFAGPFFDPSDPALFNFDLSSMNFENRYGALEFGMLGHMATGAGDSPTDSATQRGSIGRSGSTQYSTTPLTGAPGFGESPGNQQPFLFGNDPLLNEWPNSQAPNQGHLNVSGVYPQGGMMHMAKSDAPHAFAIESGPASFSSPSATTSPHINSGHDESSLSNAAVNKSTGLTANGQRPAITTPSLKHQSLQFGVKRRQRNPSTVYESVKEPYAYTNRFHNLTAFIQRRFSPQKTLQIAKALASIRPSFIATTKTLNRDDLIFMEKCFQRTLWEYEDFINACGTPTIVCRRTGEIAAVGKEFSILTGWKKDVLLGKEPNLNVNTGGSSAPGSGNTSRGSFTPRSSTLETATPGRPQPVFLAELLDDDSVVEFYEDFARLAFGDSRGSVMTTCKLLKYKTKEDMELAQSDDNQRWNNHLRKGGIAGEAGMNQLGFKDGKVECAYCWTVKRDVFDIPMLIVMNVFLPCI.

The interval 1-58 (MKTEVNGSAPALAGDHGGVDQDTPDAGDRTEQAKHKTNGATENAPKSANAKDPSRPRR) is disordered. A DNA-binding region (zn(2)-C6 fungal-type) is located at residues 65-93 (CFACQRAHLTCGDERPCQRCIKRGLQDAC). Disordered stretches follow at residues 131–224 (LSRN…GPFF), 261–328 (GDSP…LNVS), 351–418 (ESGP…QRNP), and 537–569 (NVNTGGSSAPGSGNTSRGSFTPRSSTLETATPG). Low complexity predominate over residues 134-150 (NGTTTVNTTTQQNSGSN). Composition is skewed to polar residues over residues 151 to 218 (YYPT…SQNP), 264 to 287 (PTDSATQRGSIGRSGSTQYSTTPL), and 314 to 325 (WPNSQAPNQGHL). A compositionally biased stretch (low complexity) spans 352-366 (SGPASFSSPSATTSP). 2 stretches are compositionally biased toward polar residues: residues 376–408 (SLSNAAVNKSTGLTANGQRPAITTPSLKHQSLQ) and 537–565 (NVNTGGSSAPGSGNTSRGSFTPRSSTLET).

This sequence belongs to the ERT1/acuK family.

Its subcellular location is the nucleus. Its function is as follows. Transcription factor which regulates nonfermentable carbon utilization. Activator of gluconeogenetic genes. The polypeptide is Transcription activator of gluconeogenesis acuK (acuK) (Aspergillus fumigatus (strain CBS 144.89 / FGSC A1163 / CEA10) (Neosartorya fumigata)).